Consider the following 208-residue polypeptide: HTLV-1 basic zipper factor (208 aa).

The disordered stretch occupies residues 59–93; sequence RLRWGPVGEEAPPRGETHRDRQRRAEEKRKRKRER. Residues 69-86 are compositionally biased toward basic and acidic residues; it reads APPRGETHRDRQRRAEEK. 3 short sequence motifs (nuclear localization signal) span residues 86–91, 115–119, and 136–140; these read KRKRKR, RRRRA, and RRERK. Basic and acidic residues predominate over residues 125–143; the sequence is DRARRKLEEEERRERKWRQ. Residues 125 to 160 are disordered; the sequence is DRARRKLEEEERRERKWRQTEQGAKQRSARKEKMTE.

The protein belongs to the HTLV-1 HBZ protein family. In terms of assembly, interacts with host ATF4; this interaction inhibits viral RNA transcriptional activation by preventing ATF4 binding to Tax-responsive elements. Interacts with host CREB1; this interaction inhibits host CREB1 transcriptional activity. Interacts with host JUN, JUNB and JUND. Interacts with host EP300.

Its subcellular location is the host nucleus. Contributes to the regulation of viral RNA transcription by interacting with host proteins involved in transcriptional activation such as ATF4, or CREB1, and by inhibiting their activity. Additionally, HBZ suppresses host NF-kappa-B-driven transcription mediated by host RELA as well as transcription of some classical NF-kappa-B target genes, including IL8, IL2RA, IRF4, VCAM1, and VEGFA. The chain is HTLV-1 basic zipper factor (HBZ) from Human T-cell leukemia virus 1 (isolate Melanesia mel5 subtype C) (HTLV-1).